Reading from the N-terminus, the 3746-residue chain is N-(5-amino-5-carboxypentanoyl)-L-cysteinyl-D-valine synthase (3746 aa).

The tract at residues 299–711 (EEVVERHEDK…GRADFQIKLR (413 aa)) is adenylation (A) domain 1. The Carrier 1 domain maps to 818 to 895 (DLRGDTEIAL…RMADLLQNKQ (78 aa)). Residue S855 is modified to O-(pantetheine 4'-phosphoryl)serine. A condensation (C) domain 1 region spans residues 918-1372 (NIYLANSLQQ…YLSSIQLEQL (455 aa)). The segment at 1391–1801 (FENEASQKPD…GRNDFQVKIR (411 aa)) is adenylation (A) domain 2. Residues 1902-1979 (PPRSEIERSL…AQTHLILNDA (78 aa)) form the Carrier 2 domain. An O-(pantetheine 4'-phosphoryl)serine modification is found at S1939. Residues 1994 to 2434 (QMIPVSRAQE…SELSAEGINE (441 aa)) are condensation (C) domain 2. The interval 2478–2883 (AFLAAEKIAV…GRGDLQIKMR (406 aa)) is adenylation (A) domain 3. In terms of domain architecture, Carrier 3 spans 2991-3066 (PPRNIIEAKM…ALHDHVFMKD (76 aa)). S3026 carries the O-(pantetheine 4'-phosphoryl)serine modification. Residues 3084–3500 (GEAPLLPIQD…NKILDGRASQ (417 aa)) are epimerase (E) domain. Positions 3530–3732 (TLFLLPPGEG…FSWVGNPQQV (203 aa)) are thioesterase (TE) domain.

It belongs to the NRP synthetase family. It depends on pantetheine 4'-phosphate as a cofactor. Requires Mg(2+) as cofactor.

Its subcellular location is the cytoplasm. It localises to the cytosol. It is found in the vacuole membrane. It catalyses the reaction L-2-aminoadipate + L-valine + L-cysteine + 3 ATP + H2O = N-[(5S)-5-amino-5-carboxypentanoyl]-L-cysteinyl-D-valine + 3 AMP + 3 diphosphate + 3 H(+). It participates in antibiotic biosynthesis; penicillin G biosynthesis; penicillin G from L-alpha-aminoadipate and L-cysteine and L-valine: step 1/3. Its function is as follows. Nonribosomal peptide synthetase; part of the gene cluster that mediates the biosynthesis of penicillin, the world's most important antibiotic. The trimodular NRPS acvA produces the tripeptide N-[(5S)-5-amino-5-carboxypentanoyl]-L-cysteinyl-D-valine (LLD-ACV or ACV) via condensation of the 3 residues L-2-aminoadipate, L-cysteine and L-valine. The precursor amino acids for penicillin biosynthesis are withdrawn from the vacuolar amino acid pool by the MFS-type transporter penV. Each of the constituent amino acids of the tripeptide ACV are activated as aminoacyl-adenylates with peptide bonds formed through the participation of amino acid thioester intermediates. The penicillin biosynthesis occurs via 3 enzymatic steps, the first corresponding to the production of the tripeptide N-[(5S)-5-amino-5-carboxypentanoyl]-L-cysteinyl-D-valine (LLD-ACV or ACV) by the NRPS acvA. The tripeptide ACV is then cyclized to isopenicillin N (IPN) by the isopenicillin N synthase ipnA that forms the beta-lactam nucleus. Finally, the alpha-aminoadipyl side chain is exchanged for phenylacetic acid by the isopenicillin N acyltransferase aatA to yield penicillin in the peroxisomal matrix. The chain is N-(5-amino-5-carboxypentanoyl)-L-cysteinyl-D-valine synthase from Penicillium chrysogenum (Penicillium notatum).